The chain runs to 293 residues: MDSADIRSAKAALEKAIQGKNIETIINIMTRLKNEVVATEELLKETRLGLVVGKLRSHPNEKVGEQAREIVKKWKADVSKGRPLKTTTTTSSTPSKHADVGSQAQKQVQKQSSSGQRTFKSDNVNVNVTDDKIRNNCIGLMYNALVIDSDESSSLIIAKAKEIDAQVLARAAGKTGSEYRNRMRSLYMNLKDKNNPKLRASVLRNEITPQRLSTMTSAELASEDRRKEDAKLEQENLFHAQGAKPQKAVTDLFTCGKCKQKKVSYYQMQTRSADEPMTTFCECTVCGNRWKFS.

The TFIIS N-terminal domain maps to 4–81 (ADIRSAKAAL…KKWKADVSKG (78 aa)). Residues 81 to 123 (GRPLKTTTTTSSTPSKHADVGSQAQKQVQKQSSSGQRTFKSDN) form a disordered region. Residues 100 to 116 (VGSQAQKQVQKQSSSGQ) are compositionally biased toward low complexity. Residues 133–248 (IRNNCIGLMY…HAQGAKPQKA (116 aa)) form the TFIIS central domain. Residues 251–291 (DLFTCGKCKQKKVSYYQMQTRSADEPMTTFCECTVCGNRWK) form a TFIIS-type zinc finger. Residues cysteine 255, cysteine 258, cysteine 283, and cysteine 286 each coordinate Zn(2+).

Belongs to the TFS-II family.

The protein resides in the nucleus. Its function is as follows. Necessary for efficient RNA polymerase II transcription elongation past template-encoded arresting sites. The arresting sites in DNA have the property of trapping a certain fraction of elongating RNA polymerases that pass through, resulting in locked ternary complexes. Cleavage of the nascent transcript by S-II allows the resumption of elongation from the new 3'-terminus. The protein is Transcription elongation factor S-II (tfs1) of Schizosaccharomyces pombe (strain 972 / ATCC 24843) (Fission yeast).